The following is a 308-amino-acid chain: tRNA dimethylallyltransferase (308 aa).

10–17 (GPTASGKT) provides a ligand contact to ATP. 12-17 (TASGKT) is a binding site for substrate. Interaction with substrate tRNA regions lie at residues 35–38 (DSSL) and 159–163 (QRIFR).

It belongs to the IPP transferase family. In terms of assembly, monomer. The cofactor is Mg(2+).

The enzyme catalyses adenosine(37) in tRNA + dimethylallyl diphosphate = N(6)-dimethylallyladenosine(37) in tRNA + diphosphate. Catalyzes the transfer of a dimethylallyl group onto the adenine at position 37 in tRNAs that read codons beginning with uridine, leading to the formation of N6-(dimethylallyl)adenosine (i(6)A). The protein is tRNA dimethylallyltransferase of Francisella tularensis subsp. novicida (strain U112).